The sequence spans 350 residues: MAGRSLGKAVATVSLSVALASVTVRSSGCRAIPAPRNPFPSCGFHLKANIMSGSNGVKDNSHNKARTSPYPGSKVERSKVPNEKVGWLVEWQDYNPVEYTAVSVLAGPQWADPQISESSFSPRFNEKDGHVERKSQNGLYEIENGRPRNPAGRTGLVGRGLLGRWGPNHAADPIITRWKRDESGNKITHPVSGKCILQFVAIKRKDCGEWAIPGGMVDPGEKISATLKREFGEEALNSLQKSSAEKREIEEKLHALFSQEHLVIYKGYVDDPRNTDNAWMETEAVNYHDETGETMDNLTLEAGDDAGKVKWVDISDQLKLYASHSQFIKLVAEKRDAHWSEDCAADSHGL.

The transit peptide at 1-46 (MAGRSLGKAVATVSLSVALASVTVRSSGCRAIPAPRNPFPSCGFHL) directs the protein to the mitochondrion. 2 disordered regions span residues 53–77 (GSNGVKDNSHNKARTSPYPGSKVER) and 116–153 (SESSFSPRFNEKDGHVERKSQNGLYEIENGRPRNPAGR). Ser121 carries the phosphoserine modification. A compositionally biased stretch (basic and acidic residues) spans 124–135 (FNEKDGHVERKS). In terms of domain architecture, Nudix hydrolase spans 178-334 (WKRDESGNKI…SQFIKLVAEK (157 aa)). Positions 215–237 (GMVDPGEKISATLKREFGEEALN) match the Nudix box motif.

The protein belongs to the Nudix hydrolase family. NudF subfamily. As to quaternary structure, monomer. Interacts with GLOD4. Requires Mg(2+) as cofactor. The cofactor is Mn(2+).

The protein localises to the mitochondrion. It carries out the reaction ADP-D-ribose + H2O = D-ribose 5-phosphate + AMP + 2 H(+). In terms of biological role, hydrolyzes ADP-ribose (ADPR) to AMP and ribose 5'-phosphate. In Rattus norvegicus (Rat), this protein is ADP-ribose pyrophosphatase, mitochondrial (Nudt9).